We begin with the raw amino-acid sequence, 141 residues long: Large ribosomal subunit protein uL11 (141 aa).

This sequence belongs to the universal ribosomal protein uL11 family. Part of the ribosomal stalk of the 50S ribosomal subunit. Interacts with L10 and the large rRNA to form the base of the stalk. L10 forms an elongated spine to which L12 dimers bind in a sequential fashion forming a multimeric L10(L12)X complex. Post-translationally, one or more lysine residues are methylated.

In terms of biological role, forms part of the ribosomal stalk which helps the ribosome interact with GTP-bound translation factors. The chain is Large ribosomal subunit protein uL11 from Limosilactobacillus fermentum (strain NBRC 3956 / LMG 18251) (Lactobacillus fermentum).